The following is a 119-amino-acid chain: Large ribosomal subunit protein bL20 (119 aa).

It belongs to the bacterial ribosomal protein bL20 family.

Binds directly to 23S ribosomal RNA and is necessary for the in vitro assembly process of the 50S ribosomal subunit. It is not involved in the protein synthesizing functions of that subunit. The protein is Large ribosomal subunit protein bL20 of Geobacillus sp. (strain WCH70).